We begin with the raw amino-acid sequence, 532 residues long: Glucan synthesis regulatory protein (532 aa).

The segment at 374-532 is disordered; sequence TANKRKSMAP…DAEDMKDIEI (159 aa). Positions 381–393 are enriched in low complexity; that stretch reads MAPSMASASGMRS. Residues 447–457 show a composition bias toward polar residues; the sequence is PTTSLTASNAS. A compositionally biased stretch (basic and acidic residues) spans 475-516; that stretch reads SGEHSKEDIKVNEDSPAKERTSEDKEKKPETEANGKATESKG.

The protein belongs to the KNR4/SMI1 family.

Functionally, involved in the regulation of 1,3-beta-glucan synthase activity and cell-wall formation. This is Glucan synthesis regulatory protein (cot-2) from Neurospora crassa (strain ATCC 24698 / 74-OR23-1A / CBS 708.71 / DSM 1257 / FGSC 987).